Here is a 409-residue protein sequence, read N- to C-terminus: NADH-quinone oxidoreductase subunit D 1 (409 aa).

Belongs to the complex I 49 kDa subunit family. NDH-1 is composed of 14 different subunits. Subunits NuoB, C, D, E, F, and G constitute the peripheral sector of the complex.

It localises to the cell inner membrane. It carries out the reaction a quinone + NADH + 5 H(+)(in) = a quinol + NAD(+) + 4 H(+)(out). Functionally, NDH-1 shuttles electrons from NADH, via FMN and iron-sulfur (Fe-S) centers, to quinones in the respiratory chain. The immediate electron acceptor for the enzyme in this species is believed to be ubiquinone. Couples the redox reaction to proton translocation (for every two electrons transferred, four hydrogen ions are translocated across the cytoplasmic membrane), and thus conserves the redox energy in a proton gradient. The polypeptide is NADH-quinone oxidoreductase subunit D 1 (Solibacter usitatus (strain Ellin6076)).